The primary structure comprises 590 residues: Arginine--tRNA ligase, cytoplasmic (590 aa).

Residue Ala2 is modified to N-acetylalanine. L-arginine is bound by residues 137–139 (SPN), His148, Tyr322, Asp326, and Gln350. The 'HIGH' region signature appears at 138-149 (PNIAKEMHVGHL). The tract at residues 470-484 (DTAVYLLYAHARICS) is interaction with tRNA.

Belongs to the class-I aminoacyl-tRNA synthetase family.

It localises to the cytoplasm. It is found in the cytosol. It carries out the reaction tRNA(Arg) + L-arginine + ATP = L-arginyl-tRNA(Arg) + AMP + diphosphate. Forms part of a macromolecular complex that catalyzes the attachment of specific amino acids to cognate tRNAs during protein synthesis. In Arabidopsis thaliana (Mouse-ear cress), this protein is Arginine--tRNA ligase, cytoplasmic.